Here is a 488-residue protein sequence, read N- to C-terminus: Spermatogenesis-associated protein 6 (488 aa).

A signal peptide spans 1 to 17; sequence MPKVKALQCALALEIRS. The segment at 176–225 is disordered; it reads HGRLQCRTSRSQKKKSKSPERSKYCINTKNYEQPTISSKSHSPSPYTKRR. Residues 200–220 show a composition bias toward polar residues; the sequence is CINTKNYEQPTISSKSHSPSP. 2 positions are modified to phosphoserine: Ser217 and Ser219. Lys248 is covalently cross-linked (Glycyl lysine isopeptide (Lys-Gly) (interchain with G-Cter in SUMO2)). Residues Ser265, Ser274, Ser325, Ser343, Ser346, Ser354, Ser424, Ser465, and Ser487 each carry the phosphoserine modification.

Belongs to the SPATA6 family. As to quaternary structure, interacts with MYL6. Specifically expressed in developing spermatids and mature spermatozoa (at protein level). Isoform 1 is weakly expressed in testis, ovary, thymus and placenta. Isoform 2 and isoform 3 are testis-specific. Expression isw higher in spermatids than in spermatocytes and spermatogonia.

Its subcellular location is the secreted. The protein localises to the cell projection. It is found in the cilium. It localises to the flagellum. In terms of biological role, required for formation of the sperm connecting piece during spermiogenesis. Sperm connecting piece is essential for linking the developing flagellum to the head during late spermiogenesis. May be involved in myosin-based microfilament transport through interaction with myosin subunits. This Mus musculus (Mouse) protein is Spermatogenesis-associated protein 6.